A 446-amino-acid polypeptide reads, in one-letter code: Ribosomal protein uS12 methylthiotransferase RimO (446 aa).

Residues 6-116 (PNIGFISLGC…VMQQVHKYVP (111 aa)) form the MTTase N-terminal domain. [4Fe-4S] cluster-binding residues include C15, C51, C80, C148, C152, and C155. Residues 134–375 (LTPKHYAYLK…MQLQQEISAA (242 aa)) enclose the Radical SAM core domain. The 69-residue stretch at 378 to 446 (QQKVGKVFTV…AYDLYASLIN (69 aa)) folds into the TRAM domain.

The protein belongs to the methylthiotransferase family. RimO subfamily. [4Fe-4S] cluster serves as cofactor.

It is found in the cytoplasm. It carries out the reaction L-aspartate(89)-[ribosomal protein uS12]-hydrogen + (sulfur carrier)-SH + AH2 + 2 S-adenosyl-L-methionine = 3-methylsulfanyl-L-aspartate(89)-[ribosomal protein uS12]-hydrogen + (sulfur carrier)-H + 5'-deoxyadenosine + L-methionine + A + S-adenosyl-L-homocysteine + 2 H(+). Catalyzes the methylthiolation of an aspartic acid residue of ribosomal protein uS12. This is Ribosomal protein uS12 methylthiotransferase RimO from Pasteurella multocida (strain Pm70).